The following is a 92-amino-acid chain: Serine protease inhibitor I/II (92 aa).

An N-terminal signal peptide occupies residues 1-19 (MKLALALCAAFLLVVLVQA). 2 Pacifastin domains span residues 20 to 54 (EQEC…CPPH) and 57 to 92 (EVTC…CPQK). 6 disulfides stabilise this stretch: cysteine 23/cysteine 38, cysteine 33/cysteine 51, cysteine 36/cysteine 46, cysteine 60/cysteine 75, cysteine 70/cysteine 89, and cysteine 73/cysteine 84.

The protein belongs to the protease inhibitor I19 family. Expressed in hemolymph, ovaries, testes and fat body of adults but are absent in the gut. Also present in larval hemolymph and fat body.

The protein resides in the secreted. Functionally, in vitro, is active against alpha-chymotrypsin and trypsin. Its function is as follows. In vitro, is active against alpha-chymotrypsin and pancreatic elastase. This chain is Serine protease inhibitor I/II, found in Schistocerca gregaria (Desert locust).